Here is a 765-residue protein sequence, read N- to C-terminus: FHF complex subunit HOOK interacting protein 2A (765 aa).

2 disordered regions span residues 193–236 (TLKG…DHLS) and 532–561 (TDIS…KNDG). 2 stretches are compositionally biased toward polar residues: residues 196 to 208 (GQDS…GQSR) and 535 to 550 (SPEN…SSSP).

The protein belongs to the FHIP family. Expressed in all tissues tested, highly expressed brain. As to expression, only detected at high levels in testis.

In terms of biological role, required for proper functioning of the nervous system. The protein is FHF complex subunit HOOK interacting protein 2A of Homo sapiens (Human).